The primary structure comprises 288 residues: MEILRLAQSKKNIISLNMDLERDMQRIDEANQELLLEIQEKENEIQRLEHEITQTGNPAEDEEWEKENYTVMEREQALQELEEETARLERKNETLVHSISELQRKLTRKSQKVIRYEQGDLETTPEESKVKLQQLESSCADQEKELGKIMEDYVFVSQLCEDQALCIKKYQEALKRIEEELETGYLEREVSKVLSMDSERERSTSLNKMDGFISKGALRFSKSIFRSLLFSTLFFIRLLGYLIFHLSFINPDLLVNALPKILSRDVLWKLRCFLFPSLTLETEDMLPH.

A coiled-coil region spans residues 10–189; the sequence is KKNIISLNMD…ELETGYLERE (180 aa). The chain crosses the membrane as a helical span at residues 227–249; the sequence is SLLFSTLFFIRLLGYLIFHLSFI.

This sequence belongs to the TMCO5 family. Only detected in testis (at protein level).

The protein resides in the endoplasmic reticulum membrane. Its subcellular location is the nucleus membrane. This is Transmembrane and coiled-coil domain-containing protein 5A (Tmco5a) from Mus musculus (Mouse).